Reading from the N-terminus, the 118-residue chain is Large ribosomal subunit protein bL17 (118 aa).

This sequence belongs to the bacterial ribosomal protein bL17 family. In terms of assembly, part of the 50S ribosomal subunit. Contacts protein L32.

This is Large ribosomal subunit protein bL17 from Hydrogenobaculum sp. (strain Y04AAS1).